The chain runs to 231 residues: Sugar fermentation stimulation protein homolog (231 aa).

The protein belongs to the SfsA family.

The protein is Sugar fermentation stimulation protein homolog of Geotalea daltonii (strain DSM 22248 / JCM 15807 / FRC-32) (Geobacter daltonii).